Reading from the N-terminus, the 616-residue chain is Homeodomain-interacting protein kinase 4 (616 aa).

Positions Tyr11 to Val347 constitute a Protein kinase domain. ATP-binding positions include Leu17–Val25 and Lys40. The active-site Proton acceptor is Asp136. Residues His486 to His616 are disordered. Residues Lys496–Ser511 are compositionally biased toward polar residues. Ser511 is modified (phosphoserine).

Belongs to the protein kinase superfamily. CMGC Ser/Thr protein kinase family. HIPK subfamily. Autophosphorylated.

It is found in the cytoplasm. It carries out the reaction L-seryl-[protein] + ATP = O-phospho-L-seryl-[protein] + ADP + H(+). It catalyses the reaction L-threonyl-[protein] + ATP = O-phospho-L-threonyl-[protein] + ADP + H(+). Its function is as follows. Protein kinase that phosphorylates human TP53 at Ser-9, and thus induces TP53 repression of BIRC5 promoter. May act as a corepressor of transcription factors (Potential). The sequence is that of Homeodomain-interacting protein kinase 4 (HIPK4) from Homo sapiens (Human).